A 169-amino-acid polypeptide reads, in one-letter code: Ureidoglycolate lyase (169 aa).

It belongs to the ureidoglycolate lyase family. Homodimer. Requires Ni(2+) as cofactor.

It catalyses the reaction (S)-ureidoglycolate = urea + glyoxylate. It participates in nitrogen metabolism; (S)-allantoin degradation. Functionally, catalyzes the catabolism of the allantoin degradation intermediate (S)-ureidoglycolate, generating urea and glyoxylate. Involved in the utilization of allantoin as nitrogen source. The protein is Ureidoglycolate lyase of Brucella melitensis biotype 2 (strain ATCC 23457).